Here is a 241-residue protein sequence, read N- to C-terminus: DNA repair protein RecO (241 aa).

It belongs to the RecO family.

Involved in DNA repair and RecF pathway recombination. The sequence is that of DNA repair protein RecO from Xanthomonas campestris pv. campestris (strain B100).